Consider the following 186-residue polypeptide: uncharacterized protein (186 aa).

The 76-residue stretch at 89 to 164 (LMSLGIGEDI…NTPLKLYSIY (76 aa)) folds into the Cupin type-2 domain. 117–124 (GIVKMGKS) lines the ATP pocket.

This is an uncharacterized protein from Bacillus subtilis (strain 168).